A 356-amino-acid polypeptide reads, in one-letter code: Icosanoyl-CoA 5-desaturase (356 aa).

The helical transmembrane segment at 5–25 (LYFPISISLSLSLEAMASFIA) threads the bilayer. Residues 38–58 (LDPKIPTKPEPKTETPKPKDD) form a disordered region. The span at 42–58 (IPTKPEPKTETPKPKDD) shows a compositional bias: basic and acidic residues. A run of 2 helical transmembrane segments spans residues 88 to 108 (NAVT…YFSW) and 111 to 131 (FWIS…TLCF). The Histidine box-1 motif lies at 132–137 (HRCLTH). The Histidine box-2 signature appears at 169–173 (HRYHH). The helical transmembrane segment at 236–256 (ALIALLYYVGGFPYIVWGMGF) threads the bilayer. The Histidine box-3 signature appears at 302-306 (HNNHH).

This sequence belongs to the fatty acid desaturase type 1 family. Fe(2+) is required as a cofactor.

Its subcellular location is the membrane. The catalysed reaction is eicosanoyl-CoA + 2 Fe(II)-[cytochrome b5] + O2 + 2 H(+) = (5Z)-eicosenoyl-CoA + 2 Fe(III)-[cytochrome b5] + 2 H2O. It functions in the pathway lipid metabolism; monounsaturated fatty acid biosynthesis. Its function is as follows. Desaturase involved in the biosynthesis of (5Z)-icos-5-enoate, an unusual monounsaturated fatty acid that makes up to 60% of the total fatty acids in Limnanthes sp. seed oil. Only acts on saturated fatty acids. The protein is Icosanoyl-CoA 5-desaturase of Limnanthes douglasii (Douglas' meadowfoam).